Consider the following 267-residue polypeptide: PF03932 family protein CutC (267 aa).

Belongs to the CutC family.

It is found in the cytoplasm. In Xylella fastidiosa (strain 9a5c), this protein is PF03932 family protein CutC.